Consider the following 1297-residue polypeptide: DNA-directed RNA polymerase subunit beta'' (1297 aa).

Zn(2+) contacts are provided by cysteine 220, cysteine 293, cysteine 300, and cysteine 303. Positions 1278–1288 (RRRKQNTKTRK) are enriched in basic residues. A disordered region spans residues 1278-1297 (RRRKQNTKTRKNNLFSLNEK).

It belongs to the RNA polymerase beta' chain family. RpoC2 subfamily. In terms of assembly, in plastids the minimal PEP RNA polymerase catalytic core is composed of four subunits: alpha, beta, beta', and beta''. When a (nuclear-encoded) sigma factor is associated with the core the holoenzyme is formed, which can initiate transcription. The cofactor is Zn(2+).

It is found in the plastid. It localises to the chloroplast. The enzyme catalyses RNA(n) + a ribonucleoside 5'-triphosphate = RNA(n+1) + diphosphate. Its function is as follows. DNA-dependent RNA polymerase catalyzes the transcription of DNA into RNA using the four ribonucleoside triphosphates as substrates. This chain is DNA-directed RNA polymerase subunit beta'', found in Welwitschia mirabilis (Tree tumbo).